The following is a 317-amino-acid chain: Toluene-4-sulfonate monooxygenase system reductase subunit TsaB1 (317 aa).

The FAD-binding FR-type domain occupies 2–108 (SADVPVTVAA…RATCSEMAPE (107 aa)). NAD(+) is bound at residue 110 to 220 (RRVLLLAGGI…PGSVRMERFK (111 aa)). The 2Fe-2S ferredoxin-type domain maps to 230–317 (QPFELVLQRA…CGGGRLVLDI (88 aa)). Positions 266, 271, 274, and 304 each coordinate [2Fe-2S] cluster.

As to quaternary structure, monomer. Part of the p-toluenesulfonate methyl-monooxygenase complex TsaBM, comprising the reductase TsaB and the oxygenase TsaM. It depends on FMN as a cofactor.

Iron-sulfur flavoprotein carrying electrons from NADH to the oxygenase TsaM. Involved in the toluene-4-sulfonate degradation pathway. This is Toluene-4-sulfonate monooxygenase system reductase subunit TsaB1 (tsaB1) from Comamonas testosteroni (Pseudomonas testosteroni).